A 311-amino-acid chain; its full sequence is N-acetylmuramic acid 6-phosphate etherase (311 aa).

Residues 66-230 (VVEAFEADGR…TTAAMVRLGK (165 aa)) form the SIS domain. The active-site Proton donor is E94. E125 is a catalytic residue.

It belongs to the GCKR-like family. MurNAc-6-P etherase subfamily. As to quaternary structure, homodimer.

The enzyme catalyses N-acetyl-D-muramate 6-phosphate + H2O = N-acetyl-D-glucosamine 6-phosphate + (R)-lactate. It functions in the pathway amino-sugar metabolism; N-acetylmuramate degradation. Its function is as follows. Specifically catalyzes the cleavage of the D-lactyl ether substituent of MurNAc 6-phosphate, producing GlcNAc 6-phosphate and D-lactate. The protein is N-acetylmuramic acid 6-phosphate etherase of Salinibacter ruber (strain DSM 13855 / M31).